The chain runs to 430 residues: MSSRSPRPPPRRSRRRLPRPSCCCCCCRRSHLNEDTGRFVLLAALIGLYLVAGATVFSALESPGEAEARARWGATLRNFSAAHGVAEPELRAFLRHYEAALAAGVRADALRPRWDFPGAFYFVGTVVSTIGFGMTTPATVGGKAFLIAYGLFGCAGTILFFNLFLERIISLLAFIMRACRERQLRRSGLLPATFRRGSALSEADSLAGWKPSVYHVLLILGLFAVLLSCCASAMYTSVEGWDYVDSLYFCFVTFSTIGFGDLVSSQHAAYRNQGLYRLGNFLFILLGVCCIYSLFNVISILIKQVLNWMLRKLSCRCCARCCPAPGAPLARRNAITPGSRLRRRLAALGADPAARDSDAEGRRLSGELISMRDLTASNKVSLALLQKQLSETANGYPRSVCVNTRQNGFSGGVGALGIMNNRLAETSASR.

At 1 to 38 the chain is on the cytoplasmic side; it reads MSSRSPRPPPRRSRRRLPRPSCCCCCCRRSHLNEDTGR. Residues 11 to 16 are ER retention/retrieval signal; that stretch reads RRSRRR. The helical transmembrane segment at 39 to 59 threads the bilayer; that stretch reads FVLLAALIGLYLVAGATVFSA. N78 carries N-linked (GlcNAc...) asparagine glycosylation. Positions 114–134 form an intramembrane region, pore-forming; sequence WDFPGAFYFVGTVVSTIGFGM. The K(+) site is built by T129, I130, and G131. Residues 129–134 are selectivity filter 1; sequence TIGFGM. The helical transmembrane segment at 145–165 threads the bilayer; sequence FLIAYGLFGCAGTILFFNLFL. The Cytoplasmic portion of the chain corresponds to 166–212; that stretch reads ERIISLLAFIMRACRERQLRRSGLLPATFRRGSALSEADSLAGWKPS. The helical transmembrane segment at 213-233 threads the bilayer; it reads VYHVLLILGLFAVLLSCCASA. Residues 243–263 constitute an intramembrane region (pore-forming); it reads YVDSLYFCFVTFSTIGFGDLV. T256, I257, G258, and F259 together coordinate K(+). The interval 256-261 is selectivity filter 2; the sequence is TIGFGD. The chain crosses the membrane as a helical span at residues 282-302; that stretch reads LFILLGVCCIYSLFNVISILI. Residues 303–430 lie on the Cytoplasmic side of the membrane; the sequence is KQVLNWMLRK…NRLAETSASR (128 aa).

It belongs to the two pore domain potassium channel (TC 1.A.1.8) family. In terms of assembly, homodimer. Heterodimer with KCNK13.

It localises to the cell membrane. The protein resides in the endoplasmic reticulum membrane. It carries out the reaction K(+)(in) = K(+)(out). In terms of biological role, k(+) channel subunit that may homo- and heterodimerize to form functional channels with distinct regulatory and gating properties. Can heterodimerize with KCNK13 subunit to conduct K(+) outward rectifying currents at the plasma membrane. The homodimers are mainly retained in the endoplasmic reticulum compartment and may be targeted to the cell surface upon phosphorylation or other activation signals yet to be elucidated. This Homo sapiens (Human) protein is Potassium channel subfamily K member 12.